A 421-amino-acid chain; its full sequence is Probable UDP-arabinose 4-epimerase 1 (421 aa).

The Cytoplasmic segment spans residues 1–33 (MLPTNRNRPQQRPARSWYFISDMDFSDPKRKPR). A helical; Signal-anchor for type II membrane protein membrane pass occupies residues 34 to 53 (YLSKILMVALLTAMCVVMLT). At 54–421 (QPPCHRRTPS…GYGPPQAMVL (368 aa)) the chain is on the lumenal side. Position 74–105 (74–105 (HVLVTGGAGYIGSHAALRLLKDSFRVTIVDNL)) interacts with NAD(+). The Proton acceptor role is filled by Y222.

Belongs to the NAD(P)-dependent epimerase/dehydratase family. NAD(+) serves as cofactor.

The protein resides in the golgi apparatus. It localises to the golgi stack membrane. It catalyses the reaction UDP-beta-L-arabinopyranose = UDP-alpha-D-xylose. It functions in the pathway nucleotide-sugar biosynthesis; UDP-L-arabinose biosynthesis; UDP-L-arabinose from UDP-alpha-D-xylose: step 1/1. Its pathway is cell wall biogenesis; cell wall polysaccharide biosynthesis. In Oryza sativa subsp. japonica (Rice), this protein is Probable UDP-arabinose 4-epimerase 1 (UEL-1).